The primary structure comprises 402 residues: Argininosuccinate synthase (402 aa).

ATP is bound by residues 10 to 18 (AYSGGLDTS) and Ala38. L-citrulline is bound at residue Tyr90. Position 120 (Gly120) interacts with ATP. The L-aspartate site is built by Thr122, Asn126, and Asp127. An L-citrulline-binding site is contributed by Asn126. L-citrulline is bound by residues Arg130, Ser179, Ser188, Glu264, and Tyr276.

It belongs to the argininosuccinate synthase family. Type 1 subfamily. Homotetramer.

It localises to the cytoplasm. The enzyme catalyses L-citrulline + L-aspartate + ATP = 2-(N(omega)-L-arginino)succinate + AMP + diphosphate + H(+). It functions in the pathway amino-acid biosynthesis; L-arginine biosynthesis; L-arginine from L-ornithine and carbamoyl phosphate: step 2/3. The sequence is that of Argininosuccinate synthase from Psychromonas ingrahamii (strain DSM 17664 / CCUG 51855 / 37).